The following is a 202-amino-acid chain: ATP-dependent Clp protease proteolytic subunit 1 (202 aa).

The active-site Nucleophile is serine 99. Histidine 123 is an active-site residue.

This sequence belongs to the peptidase S14 family. As to quaternary structure, fourteen ClpP subunits assemble into 2 heptameric rings which stack back to back to give a disk-like structure with a central cavity, resembling the structure of eukaryotic proteasomes.

It localises to the cytoplasm. The enzyme catalyses Hydrolysis of proteins to small peptides in the presence of ATP and magnesium. alpha-casein is the usual test substrate. In the absence of ATP, only oligopeptides shorter than five residues are hydrolyzed (such as succinyl-Leu-Tyr-|-NHMec, and Leu-Tyr-Leu-|-Tyr-Trp, in which cleavage of the -Tyr-|-Leu- and -Tyr-|-Trp bonds also occurs).. Its function is as follows. Cleaves peptides in various proteins in a process that requires ATP hydrolysis. Has a chymotrypsin-like activity. Plays a major role in the degradation of misfolded proteins. This Symbiobacterium thermophilum (strain DSM 24528 / JCM 14929 / IAM 14863 / T) protein is ATP-dependent Clp protease proteolytic subunit 1.